A 197-amino-acid chain; its full sequence is Ycf20-like protein (197 aa).

The next 3 membrane-spanning stretches (helical) occupy residues 113–133 (MKIF…TILG), 138–158 (WDVL…MLMY), and 173–193 (FVVF…VDAF).

It belongs to the ycf20 family.

Its subcellular location is the membrane. This Arabidopsis thaliana (Mouse-ear cress) protein is Ycf20-like protein.